We begin with the raw amino-acid sequence, 126 residues long: Probable prefoldin subunit 4 (126 aa).

Belongs to the prefoldin subunit beta family. In terms of assembly, heterohexamer of two PFD-alpha type and four PFD-beta type subunits.

Binds specifically to cytosolic chaperonin (c-CPN) and transfers target proteins to it. Binds to nascent polypeptide chain and promotes folding in an environment in which there are many competing pathways for nonnative proteins. The polypeptide is Probable prefoldin subunit 4 (pfd-4) (Caenorhabditis elegans).